An 86-amino-acid polypeptide reads, in one-letter code: Chymotrypsin inhibitor (86 aa).

Positions 1–16 are cleaved as a signal peptide; the sequence is MKTLCIFLVLVVAVAA. 4 disulfides stabilise this stretch: cysteine 26/cysteine 58, cysteine 38/cysteine 50, cysteine 42/cysteine 82, and cysteine 60/cysteine 76. The TIL domain maps to 26–82; it reads CPPNKEFGSYGDCPPSCLKNPPNFCTLKLNYGCKCKEGYVLTRYQDYESDCIKPEEC.

It belongs to the serine protease inhibitor-like (TIL domain-containing) family. Only expressed in fat body.

The protein localises to the secreted. In terms of biological role, serine protease inhibitor that inhibits chymotrypsin (IC(50)=34.13 nM, Ki=49.85 nM), microbial serine proteases (subtilisin A (IC(50)=21.31 nM, Ki=20.51 nM) and proteinase K (IC(50)=52.56 nM, Ki=65.42 nM)), as well as human neutrophil elastase (IC(50)=11.54 nM, Ki=8.74 nM), and porcine pancreatic elastase (IC(50)=19.07 nM, Ki=11.32 nM). The sequence is that of Chymotrypsin inhibitor from Araneus ventricosus (Orbweaver spider).